Reading from the N-terminus, the 431-residue chain is MKICLVGYGKSNNELLTKLLKSNHEIFVSQDKDFTKTDEIYFKKNNIQYETNHNDLLKNCDLAIVSPGIPPNSKAAKIIFENNIDYTTELEYSWQNIKKENKKAVFIGITGTDGKSTTTSLIGHILKFADPLTFVGGNIGVPLAKASETLNYYVVEVSSFQIFWSKTFTPEISVLTNLAPDHLNWHKDLNDYYQTKAKLLLRTLKSGGVAVVNEDAVNLLNLKDYQASERIITFSKNMIEGNYIKYKDKKIQVNNKIFELDIFKEDILASAVTTLNLGISEKIIEEAINSFKPLKYRLELIKSKNGVNYYNDSKATNVHSAYNAYKSFRGMHYIAILSGIPKNEDLTPLIEELKTYAKAVIVFGEMEKEVKKYPLNSKFIFKNNLEEVFLYLSEICEVGDNVVFSPAGASFDKYKNYEERGEHFNLLVEKS.

111–117 (GTDGKST) is a binding site for ATP.

This sequence belongs to the MurCDEF family.

It localises to the cytoplasm. It catalyses the reaction UDP-N-acetyl-alpha-D-muramoyl-L-alanine + D-glutamate + ATP = UDP-N-acetyl-alpha-D-muramoyl-L-alanyl-D-glutamate + ADP + phosphate + H(+). It functions in the pathway cell wall biogenesis; peptidoglycan biosynthesis. Cell wall formation. Catalyzes the addition of glutamate to the nucleotide precursor UDP-N-acetylmuramoyl-L-alanine (UMA). The polypeptide is UDP-N-acetylmuramoylalanine--D-glutamate ligase (Petrotoga mobilis (strain DSM 10674 / SJ95)).